The sequence spans 178 residues: ATP synthase subunit delta (178 aa).

The protein belongs to the ATPase delta chain family. As to quaternary structure, F-type ATPases have 2 components, F(1) - the catalytic core - and F(0) - the membrane proton channel. F(1) has five subunits: alpha(3), beta(3), gamma(1), delta(1), epsilon(1). F(0) has three main subunits: a(1), b(2) and c(10-14). The alpha and beta chains form an alternating ring which encloses part of the gamma chain. F(1) is attached to F(0) by a central stalk formed by the gamma and epsilon chains, while a peripheral stalk is formed by the delta and b chains.

Its subcellular location is the cell membrane. Functionally, f(1)F(0) ATP synthase produces ATP from ADP in the presence of a proton or sodium gradient. F-type ATPases consist of two structural domains, F(1) containing the extramembraneous catalytic core and F(0) containing the membrane proton channel, linked together by a central stalk and a peripheral stalk. During catalysis, ATP synthesis in the catalytic domain of F(1) is coupled via a rotary mechanism of the central stalk subunits to proton translocation. This protein is part of the stalk that links CF(0) to CF(1). It either transmits conformational changes from CF(0) to CF(1) or is implicated in proton conduction. This chain is ATP synthase subunit delta, found in Streptococcus equinus (Streptococcus bovis).